The primary structure comprises 750 residues: Putative tyrosine-protein kinase EpsB (750 aa).

At 1–31 the chain is on the cytoplasmic side; it reads MTQNLPQPPAVNAPENELDLVRYLDVLVANR. Residues 32 to 52 traverse the membrane as a helical segment; the sequence is WLIAGIAAAVMLLGAAYAFLA. Residues 53–444 lie on the Periplasmic side of the membrane; the sequence is RPVYEADIMV…VPEEPVKPKK (392 aa). A helical transmembrane segment spans residues 445–465; it reads LTVTPLAGVLGVVLGVMAAFV. Over 466-750 the chain is Cytoplasmic; sequence RNALFGGITD…NSKPPEAESA (285 aa).

This sequence belongs to the etk/wzc family.

Its subcellular location is the cell inner membrane. The catalysed reaction is L-tyrosyl-[protein] + ATP = O-phospho-L-tyrosyl-[protein] + ADP + H(+). Probably involved in polymerization and/or export of exopolysaccharide EPS I which functions as a virulence factor. May be involved in an ATP-dependent process in the pathway for EPS I production, possibly export of the trimeric repeat units across the inner membrane or their polymerization. This Ralstonia solanacearum (Pseudomonas solanacearum) protein is Putative tyrosine-protein kinase EpsB (epsB).